A 492-amino-acid polypeptide reads, in one-letter code: 2,3-bisphosphoglycerate-independent phosphoglycerate mutase (492 aa).

Residues Asp11 and Ser61 each coordinate Mn(2+). The Phosphoserine intermediate role is filled by Ser61. Substrate contacts are provided by residues His118, 147 to 148 (RD), Arg178, Arg184, 248 to 251 (RNDR), and Lys320. 5 residues coordinate Mn(2+): Asp386, His390, Asp427, His428, and His445.

It belongs to the BPG-independent phosphoglycerate mutase family. Monomer. Mn(2+) is required as a cofactor.

The catalysed reaction is (2R)-2-phosphoglycerate = (2R)-3-phosphoglycerate. The protein operates within carbohydrate degradation; glycolysis; pyruvate from D-glyceraldehyde 3-phosphate: step 3/5. Functionally, catalyzes the interconversion of 2-phosphoglycerate and 3-phosphoglycerate. In Campylobacter jejuni subsp. jejuni serotype O:2 (strain ATCC 700819 / NCTC 11168), this protein is 2,3-bisphosphoglycerate-independent phosphoglycerate mutase.